Consider the following 599-residue polypeptide: Protein ECM25 (599 aa).

In terms of domain architecture, Rho-GAP spans 181 to 359; sequence NRLTPLAIRQ…NLLDFFPEIA (179 aa). 3 disordered regions span residues 362 to 447, 468 to 495, and 543 to 563; these read ISSP…PLPI, ASSS…SSTD, and ELQE…KFSQ. Composition is skewed to low complexity over residues 363–373, 396–413, and 468–483; these read SSPPSSVSSSS, TLPR…TSPT, and ASSS…KTPS. A compositionally biased stretch (basic and acidic residues) spans 543–562; sequence ELQEKKKKNETTSKTADKFS.

The protein resides in the cytoplasm. In terms of biological role, may be involved in cell wall organization and biogenesis. This is Protein ECM25 (ECM25) from Saccharomyces cerevisiae (strain ATCC 204508 / S288c) (Baker's yeast).